The following is a 463-amino-acid chain: Probable ECA polymerase (463 aa).

11 consecutive transmembrane segments (helical) span residues 6–26, 39–59, 65–85, 112–132, 154–174, 180–200, 201–221, 222–242, 340–360, 377–397, and 408–428; these read FGGL…LTWM, FSLL…VLVF, VVPV…YAIY, ANLT…IFFL, GVAL…VYFL, AWLM…VIVG, GTRA…IVRG, WITL…MFWL, LVVM…GLVI, YKAA…IVLT, and VVFF…LYWL.

This sequence belongs to the WzyE family. Probably part of a complex composed of WzxE, WzyE and WzzE.

The protein resides in the cell inner membrane. It functions in the pathway bacterial outer membrane biogenesis; enterobacterial common antigen biosynthesis. In terms of biological role, probably involved in the polymerization of enterobacterial common antigen (ECA) trisaccharide repeat units. This chain is Probable ECA polymerase, found in Pectobacterium carotovorum subsp. carotovorum (strain PC1).